Consider the following 579-residue polypeptide: UPF0324 membrane protein DVU_2133 (579 aa).

11 helical membrane passes run Tyr-26–Ala-45, Pro-193–Met-215, Phe-225–Gly-243, Tyr-250–Thr-272, Ile-305–Phe-327, Leu-369–Ile-391, Gly-401–Gly-423, Ile-436–Val-456, Phe-476–Gly-495, Leu-515–Arg-534, and Tyr-549–Val-571.

The protein belongs to the UPF0324 family.

It localises to the cell membrane. The chain is UPF0324 membrane protein DVU_2133 from Nitratidesulfovibrio vulgaris (strain ATCC 29579 / DSM 644 / CCUG 34227 / NCIMB 8303 / VKM B-1760 / Hildenborough) (Desulfovibrio vulgaris).